A 129-amino-acid polypeptide reads, in one-letter code: Phosphoribosyl-AMP cyclohydrolase (129 aa).

Residue Asp77 coordinates Mg(2+). Cys78 is a binding site for Zn(2+). The Mg(2+) site is built by Asp79 and Asp81. Residues Cys94 and Cys101 each contribute to the Zn(2+) site.

This sequence belongs to the PRA-CH family. Homodimer. Mg(2+) serves as cofactor. Zn(2+) is required as a cofactor.

The protein localises to the cytoplasm. The enzyme catalyses 1-(5-phospho-beta-D-ribosyl)-5'-AMP + H2O = 1-(5-phospho-beta-D-ribosyl)-5-[(5-phospho-beta-D-ribosylamino)methylideneamino]imidazole-4-carboxamide. Its pathway is amino-acid biosynthesis; L-histidine biosynthesis; L-histidine from 5-phospho-alpha-D-ribose 1-diphosphate: step 3/9. Functionally, catalyzes the hydrolysis of the adenine ring of phosphoribosyl-AMP. In Pelotomaculum thermopropionicum (strain DSM 13744 / JCM 10971 / SI), this protein is Phosphoribosyl-AMP cyclohydrolase.